Consider the following 257-residue polypeptide: Ribonuclease HII (257 aa).

The 186-residue stretch at 72-257 (TYIAGIDEVG…FAPIKDMIQK (186 aa)) folds into the RNase H type-2 domain. A divalent metal cation contacts are provided by D78, E79, and D170.

Belongs to the RNase HII family. Mn(2+) is required as a cofactor. It depends on Mg(2+) as a cofactor.

It is found in the cytoplasm. The catalysed reaction is Endonucleolytic cleavage to 5'-phosphomonoester.. In terms of biological role, endonuclease that specifically degrades the RNA of RNA-DNA hybrids. The protein is Ribonuclease HII of Bacillus cereus (strain ATCC 10987 / NRS 248).